The chain runs to 632 residues: MAU2 chromatid cohesion factor homolog (632 aa).

TPR repeat units lie at residues 453–486 (GGFYYVQGLHAFHKNSFHEAKRFLRETLKMANAE) and 493–526 (SCSLVLLSHVFLSIGNSKESMNMVTPAMQLASKI).

It belongs to the SCC4/mau-2 family. As to quaternary structure, interacts with Nipped-B to form the cohesin loading complex.

The protein localises to the nucleus. Its subcellular location is the nucleoplasm. In terms of biological role, required for association of the cohesin complex with chromatin during interphase. Plays a role in sister chromatid cohesion and normal progression through prometaphase. This Drosophila melanogaster (Fruit fly) protein is MAU2 chromatid cohesion factor homolog.